A 430-amino-acid chain; its full sequence is Enolase (430 aa).

Q167 serves as a coordination point for (2R)-2-phosphoglycerate. E209 serves as the catalytic Proton donor. The Mg(2+) site is built by D246, E289, and D316. Residues K341, R370, S371, and K392 each coordinate (2R)-2-phosphoglycerate. K341 (proton acceptor) is an active-site residue.

Belongs to the enolase family. Component of the RNA degradosome, a multiprotein complex involved in RNA processing and mRNA degradation. It depends on Mg(2+) as a cofactor.

Its subcellular location is the cytoplasm. The protein localises to the secreted. It localises to the cell surface. The catalysed reaction is (2R)-2-phosphoglycerate = phosphoenolpyruvate + H2O. The protein operates within carbohydrate degradation; glycolysis; pyruvate from D-glyceraldehyde 3-phosphate: step 4/5. In terms of biological role, catalyzes the reversible conversion of 2-phosphoglycerate (2-PG) into phosphoenolpyruvate (PEP). It is essential for the degradation of carbohydrates via glycolysis. The protein is Enolase of Alcanivorax borkumensis (strain ATCC 700651 / DSM 11573 / NCIMB 13689 / SK2).